Consider the following 629-residue polypeptide: Dapper homolog 3 (629 aa).

Ser6 carries the post-translational modification Phosphoserine. Disordered regions lie at residues 50–76 and 105–574; these read PGMG…RRAA and GGLE…GGLV. The span at 56-69 shows a compositional bias: acidic residues; the sequence is EAEDEEDADEDEDA. The stretch at 63 to 87 forms a coiled coil; that stretch reads ADEDEDAAAARRAAAALEEQLEALP. Positions 105 to 150 are enriched in low complexity; sequence GGLEQESGRSSGFYEDPSSTGGPDSPPSTFCGDSGFSGSSSYGRLG. Phosphoserine occurs at positions 165 and 239. Arg258 carries the post-translational modification Omega-N-methylarginine. The segment covering 301-311 has biased composition (basic and acidic residues); that stretch reads PAREPSLERVG. Residues 316–335 show a composition bias toward low complexity; sequence SPAALSRAWASSWESEAAPE. The segment covering 336-348 has biased composition (pro residues); it reads PAAPPAAPSPPDS. 2 positions are modified to phosphoserine: Ser426 and Ser478. The segment covering 525 to 535 has biased composition (low complexity); the sequence is SAGRLGPLGRR. Positions 536–546 are enriched in gly residues; the sequence is GPAGGVGGGYG. A compositionally biased stretch (low complexity) spans 547–568; sequence ESESSASEGESPAFSSASSDSD. The PDZ-binding motif lies at 626–629; sequence MTTV.

This sequence belongs to the dapper family. In terms of assembly, can form homodimers and heterodimers with DACT1 or DACT3. Interacts with CSNK1D, PKA catalytic subunit, PKC-type kinase, DVL1, DVL3, VANGL1, VANGL2 and CTNND1. Interacts with DVL2.

Functionally, may be involved in regulation of intracellular signaling pathways during development. Specifically thought to play a role in canonical and/or non-canonical Wnt signaling pathways through interaction with DSH (Dishevelled) family proteins. In Homo sapiens (Human), this protein is Dapper homolog 3 (DACT3).